The following is a 124-amino-acid chain: Ribonuclease VapC32 (124 aa).

In terms of domain architecture, PINc spans 2–112; it reads ILVDTSVWIE…TRDKRLKAAC (111 aa). 2 residues coordinate Mg(2+): Asp5 and Asp86.

This sequence belongs to the PINc/VapC protein family. Mg(2+) serves as cofactor.

In terms of biological role, toxic component of a type II toxin-antitoxin (TA) system. An RNase. Its toxic effect is neutralized by coexpression with cognate antitoxin VapB32. The chain is Ribonuclease VapC32 from Mycobacterium tuberculosis (strain CDC 1551 / Oshkosh).